A 283-amino-acid chain; its full sequence is Probable endonuclease 4 (283 aa).

Zn(2+) is bound by residues H67, H107, E144, D178, H181, H215, D228, H230, and E260.

It belongs to the AP endonuclease 2 family. The cofactor is Zn(2+).

The catalysed reaction is Endonucleolytic cleavage to 5'-phosphooligonucleotide end-products.. Endonuclease IV plays a role in DNA repair. It cleaves phosphodiester bonds at apurinic or apyrimidinic (AP) sites, generating a 3'-hydroxyl group and a 5'-terminal sugar phosphate. This is Probable endonuclease 4 from Citrifermentans bemidjiense (strain ATCC BAA-1014 / DSM 16622 / JCM 12645 / Bem) (Geobacter bemidjiensis).